A 394-amino-acid chain; its full sequence is Exodeoxyribonuclease 7 large subunit (394 aa).

It belongs to the XseA family. As to quaternary structure, heterooligomer composed of large and small subunits.

The protein resides in the cytoplasm. The enzyme catalyses Exonucleolytic cleavage in either 5'- to 3'- or 3'- to 5'-direction to yield nucleoside 5'-phosphates.. Functionally, bidirectionally degrades single-stranded DNA into large acid-insoluble oligonucleotides, which are then degraded further into small acid-soluble oligonucleotides. The sequence is that of Exodeoxyribonuclease 7 large subunit from Thermotoga maritima (strain ATCC 43589 / DSM 3109 / JCM 10099 / NBRC 100826 / MSB8).